The chain runs to 417 residues: Acetate kinase (417 aa).

N7 contributes to the Mg(2+) binding site. Residue K14 participates in ATP binding. Position 104 (R104) interacts with substrate. D162 functions as the Proton donor/acceptor in the catalytic mechanism. ATP contacts are provided by residues 222–226 (HLGNG), 297–299 (DMR), and 346–350 (GIGEN). E401 provides a ligand contact to Mg(2+).

It belongs to the acetokinase family. As to quaternary structure, homodimer. It depends on Mg(2+) as a cofactor. Mn(2+) serves as cofactor.

It is found in the cytoplasm. It catalyses the reaction acetate + ATP = acetyl phosphate + ADP. It participates in metabolic intermediate biosynthesis; acetyl-CoA biosynthesis; acetyl-CoA from acetate: step 1/2. In terms of biological role, catalyzes the formation of acetyl phosphate from acetate and ATP. Can also catalyze the reverse reaction. The protein is Acetate kinase of Chloroherpeton thalassium (strain ATCC 35110 / GB-78).